A 282-amino-acid chain; its full sequence is Putative 23S rRNA (guanine-N(1)-)-methyltransferase YxjB (282 aa).

Positions 12, 15, 29, and 34 each coordinate Zn(2+). 103–104 (EG) serves as a coordination point for S-adenosyl-L-methionine.

Belongs to the methyltransferase superfamily. RlmA family.

This Bacillus subtilis (strain 168) protein is Putative 23S rRNA (guanine-N(1)-)-methyltransferase YxjB (yxjB).